Here is a 395-residue protein sequence, read N- to C-terminus: MNVKTTYRRVFLIVMDSVGIGEAPDAEKYNDKGADTLGHIAEYRGGLYMPNMAKLGLSHIREIKGVPKVERPLAYYTKMKEASAGKDTMTGHWELMGLRIDKPFRVFPNGFPDELIAELERRTGRNVIGNKPASGTAIIEELGEEHMKTGAIIVYTSADSVLQIAAHEQVVPLDELYRICEIARELTRDEPYMVGRVIARPFIGKPGHFERTANRHDYALKPFGKTVMNELKDAGYEVIAIGKIADIYDNEGVTQSLRTTSNMDGMDKLVDTLGMDFTGLSFVNLVDFDAKYGHRRDPKGYGDALEEFDARLADVLPRLKEDDLLIITADHGNDPVHHGTDHTREYVPLLVYSPRFRGGKPLPVRETFADVGATIADNFQVNRPPYGTSFLADLA.

Positions 16, 289, 294, 330, 331, and 342 each coordinate Mn(2+).

It belongs to the phosphopentomutase family. Mn(2+) is required as a cofactor.

The protein localises to the cytoplasm. The enzyme catalyses 2-deoxy-alpha-D-ribose 1-phosphate = 2-deoxy-D-ribose 5-phosphate. It carries out the reaction alpha-D-ribose 1-phosphate = D-ribose 5-phosphate. Its pathway is carbohydrate degradation; 2-deoxy-D-ribose 1-phosphate degradation; D-glyceraldehyde 3-phosphate and acetaldehyde from 2-deoxy-alpha-D-ribose 1-phosphate: step 1/2. In terms of biological role, isomerase that catalyzes the conversion of deoxy-ribose 1-phosphate (dRib-1-P) and ribose 1-phosphate (Rib-1-P) to deoxy-ribose 5-phosphate (dRib-5-P) and ribose 5-phosphate (Rib-5-P), respectively. This is Phosphopentomutase from Geobacillus kaustophilus (strain HTA426).